We begin with the raw amino-acid sequence, 178 residues long: Large ribosomal subunit protein uL6 (178 aa).

This sequence belongs to the universal ribosomal protein uL6 family. Part of the 50S ribosomal subunit.

Its function is as follows. This protein binds to the 23S rRNA, and is important in its secondary structure. It is located near the subunit interface in the base of the L7/L12 stalk, and near the tRNA binding site of the peptidyltransferase center. This chain is Large ribosomal subunit protein uL6, found in Staphylococcus carnosus (strain TM300).